Here is a 203-residue protein sequence, read N- to C-terminus: AFG2-interacting ribosome maturation factor (203 aa).

As to quaternary structure, part of the 55LCC heterohexameric ATPase complex composed at least of AIRIM, AFG2A, AFG2B and CINP. Does not associate with pre-60S ribosomal particles. Post-translationally, phosphorylated on serines by CK2 kinase.

It localises to the nucleus. The protein resides in the cytoplasm. Functionally, part of the 55LCC heterohexameric ATPase complex which is chromatin-associated and promotes replisome proteostasis to maintain replication fork progression and genome stability. Required for replication fork progression, sister chromatid cohesion, and chromosome stability. The ATPase activity is specifically enhanced by replication fork DNA and is coupled to cysteine protease-dependent cleavage of replisome substrates in response to replication fork damage. Uses ATPase activity to process replisome substrates in S-phase, facilitating their proteolytic turnover from chromatin to ensure DNA replication and mitotic fidelity. Involved in the cytoplasmic maturation steps of pre-60S ribosomal particles by promoting the release of shuttling protein RSL24D1/RLP24 from the pre-ribosomal particles. In Homo sapiens (Human), this protein is AFG2-interacting ribosome maturation factor.